Consider the following 159-residue polypeptide: 2-C-methyl-D-erythritol 2,4-cyclodiphosphate synthase (159 aa).

A divalent metal cation contacts are provided by Asp8 and His10. Residues 8–10 (DVH) and 34–35 (HS) each bind 4-CDP-2-C-methyl-D-erythritol 2-phosphate. His42 is a binding site for a divalent metal cation. 4-CDP-2-C-methyl-D-erythritol 2-phosphate is bound by residues 56–58 (DIG), 61–65 (FPDTD), 100–106 (AQAPKMA), 132–135 (TTSE), Phe139, and Arg142.

This sequence belongs to the IspF family. In terms of assembly, homotrimer. It depends on a divalent metal cation as a cofactor.

The enzyme catalyses 4-CDP-2-C-methyl-D-erythritol 2-phosphate = 2-C-methyl-D-erythritol 2,4-cyclic diphosphate + CMP. The protein operates within isoprenoid biosynthesis; isopentenyl diphosphate biosynthesis via DXP pathway; isopentenyl diphosphate from 1-deoxy-D-xylulose 5-phosphate: step 4/6. In terms of biological role, involved in the biosynthesis of isopentenyl diphosphate (IPP) and dimethylallyl diphosphate (DMAPP), two major building blocks of isoprenoid compounds. Catalyzes the conversion of 4-diphosphocytidyl-2-C-methyl-D-erythritol 2-phosphate (CDP-ME2P) to 2-C-methyl-D-erythritol 2,4-cyclodiphosphate (ME-CPP) with a corresponding release of cytidine 5-monophosphate (CMP). This Aliivibrio salmonicida (strain LFI1238) (Vibrio salmonicida (strain LFI1238)) protein is 2-C-methyl-D-erythritol 2,4-cyclodiphosphate synthase.